We begin with the raw amino-acid sequence, 447 residues long: N-succinylarginine dihydrolase (447 aa).

Substrate-binding positions include 19-28 (AGLSFGNEAS), Asn110, and 137-138 (HR). Glu174 is a catalytic residue. Arg212 lines the substrate pocket. His248 is a catalytic residue. Substrate contacts are provided by Asp250 and Asn359. Cys365 functions as the Nucleophile in the catalytic mechanism.

It belongs to the succinylarginine dihydrolase family. As to quaternary structure, homodimer.

It catalyses the reaction N(2)-succinyl-L-arginine + 2 H2O + 2 H(+) = N(2)-succinyl-L-ornithine + 2 NH4(+) + CO2. It functions in the pathway amino-acid degradation; L-arginine degradation via AST pathway; L-glutamate and succinate from L-arginine: step 2/5. Catalyzes the hydrolysis of N(2)-succinylarginine into N(2)-succinylornithine, ammonia and CO(2). This chain is N-succinylarginine dihydrolase, found in Escherichia coli (strain SE11).